The chain runs to 251 residues: CDP-diacylglycerol pyrophosphatase (251 aa).

A helical transmembrane segment spans residues 4–24 (AGLLFLVMIVIAVVAAGIGYW).

The protein belongs to the Cdh family.

Its subcellular location is the cell inner membrane. It carries out the reaction a CDP-1,2-diacyl-sn-glycerol + H2O = a 1,2-diacyl-sn-glycero-3-phosphate + CMP + 2 H(+). It participates in phospholipid metabolism; CDP-diacylglycerol degradation; phosphatidate from CDP-diacylglycerol: step 1/1. This chain is CDP-diacylglycerol pyrophosphatase, found in Escherichia coli O9:H4 (strain HS).